A 456-amino-acid polypeptide reads, in one-letter code: Exodeoxyribonuclease 7 large subunit (456 aa).

The protein belongs to the XseA family. Heterooligomer composed of large and small subunits.

It localises to the cytoplasm. It carries out the reaction Exonucleolytic cleavage in either 5'- to 3'- or 3'- to 5'-direction to yield nucleoside 5'-phosphates.. In terms of biological role, bidirectionally degrades single-stranded DNA into large acid-insoluble oligonucleotides, which are then degraded further into small acid-soluble oligonucleotides. The polypeptide is Exodeoxyribonuclease 7 large subunit (Azotobacter vinelandii (strain DJ / ATCC BAA-1303)).